A 117-amino-acid chain; its full sequence is UPF0102 protein Rsph17025_0472 (117 aa).

It belongs to the UPF0102 family.

The sequence is that of UPF0102 protein Rsph17025_0472 from Cereibacter sphaeroides (strain ATCC 17025 / ATH 2.4.3) (Rhodobacter sphaeroides).